The following is a 476-amino-acid chain: Glycogen synthase (476 aa).

Lys15 provides a ligand contact to ADP-alpha-D-glucose.

This sequence belongs to the glycosyltransferase 1 family. Bacterial/plant glycogen synthase subfamily.

It carries out the reaction [(1-&gt;4)-alpha-D-glucosyl](n) + ADP-alpha-D-glucose = [(1-&gt;4)-alpha-D-glucosyl](n+1) + ADP + H(+). Its pathway is glycan biosynthesis; glycogen biosynthesis. In terms of biological role, synthesizes alpha-1,4-glucan chains using ADP-glucose. This Haemophilus influenzae (strain 86-028NP) protein is Glycogen synthase.